The sequence spans 466 residues: MSVVPVVDVLQGRAAVDSEVTVRGWVRTRRDSKAGISFLAVYDGSCFDPLQAVVNNSLPNYQDEVLHLTTGCSIEVTGVVVASPGEGQSFELQATAIKVVGWVDDPDTYPMAAKRHSIEYLREVAHLRPRTNLIGAVARVRHTLAQAIHRFYHENGFFWVSTPLITASDTEGAGEMFRVSTLDLENLPRTDKGAVDFSQDFFGKEAFLTVSGQLNGETYACALSKIYTFGPTFRAENSNTSRHLAEFWMIEPEVAFADLEDIAELAEKMLKYVFQAVLNERMDDMQFFAERVDKDAIDRLQRFVTSDFAQVDYTEAVEILIASGQTFENPVSWGIDLSSEHERYLAEKHFKAPVVVKNYPKDIKAFYMRMNDDGKTVAAMDVLAPGIGEIIGGAQREERLDVLDQRLEAMGLNKEDYWWYRDLRRYGTVPHAGFGLGFERLIAYVTGVQNVRDVIPFPRTPRNATF.

Belongs to the class-II aminoacyl-tRNA synthetase family. Homodimer.

The protein resides in the cytoplasm. It carries out the reaction tRNA(Asn) + L-asparagine + ATP = L-asparaginyl-tRNA(Asn) + AMP + diphosphate + H(+). The chain is Asparagine--tRNA ligase from Serratia proteamaculans (strain 568).